The chain runs to 280 residues: Energy-coupling factor transporter ATP-binding protein EcfA1 (280 aa).

Residues 6 to 241 form the ABC transporter domain; that stretch reads IELKNVTFRY…GDELLDLGLD (236 aa). Residue 41–48 participates in ATP binding; it reads GHNGSGKS.

Belongs to the ABC transporter superfamily. Energy-coupling factor EcfA family. As to quaternary structure, forms a stable energy-coupling factor (ECF) transporter complex composed of 2 membrane-embedded substrate-binding proteins (S component), 2 ATP-binding proteins (A component) and 2 transmembrane proteins (T component).

It localises to the cell membrane. In terms of biological role, ATP-binding (A) component of a common energy-coupling factor (ECF) ABC-transporter complex. Unlike classic ABC transporters this ECF transporter provides the energy necessary to transport a number of different substrates. The sequence is that of Energy-coupling factor transporter ATP-binding protein EcfA1 from Streptococcus mutans serotype c (strain ATCC 700610 / UA159).